The sequence spans 370 residues: N-acetyltaurine hydrolase (370 aa).

A divalent metal cation contacts are provided by histidine 26, histidine 28, glutamate 189, histidine 221, histidine 250, and aspartate 318.

This sequence belongs to the metallo-dependent hydrolases superfamily. Phosphotriesterase family. The cofactor is a divalent metal cation.

Its subcellular location is the cytoplasm. The protein resides in the cytosol. It carries out the reaction N-acetyltaurine + H2O = taurine + acetate. N-acetyltaurine hydrolase catalyzes the hydrolysis of N-acetyltaurine into taurine and acetate. In Dictyostelium discoideum (Social amoeba), this protein is N-acetyltaurine hydrolase (pter).